Here is a 674-residue protein sequence, read N- to C-terminus: DNA ligase (674 aa).

Residues Asp-35–Asp-39, Ser-84–Leu-85, and Glu-118 each bind NAD(+). The active-site N6-AMP-lysine intermediate is the Lys-120. 4 residues coordinate NAD(+): Arg-141, Glu-184, Lys-297, and Lys-321. Cys-415, Cys-418, Cys-433, and Cys-439 together coordinate Zn(2+). A BRCT domain is found at Leu-598–Leu-674.

The protein belongs to the NAD-dependent DNA ligase family. LigA subfamily. Mg(2+) serves as cofactor. Mn(2+) is required as a cofactor.

The enzyme catalyses NAD(+) + (deoxyribonucleotide)n-3'-hydroxyl + 5'-phospho-(deoxyribonucleotide)m = (deoxyribonucleotide)n+m + AMP + beta-nicotinamide D-nucleotide.. Functionally, DNA ligase that catalyzes the formation of phosphodiester linkages between 5'-phosphoryl and 3'-hydroxyl groups in double-stranded DNA using NAD as a coenzyme and as the energy source for the reaction. It is essential for DNA replication and repair of damaged DNA. The protein is DNA ligase of Chlorobium phaeovibrioides (strain DSM 265 / 1930) (Prosthecochloris vibrioformis (strain DSM 265)).